Here is a 145-residue protein sequence, read N- to C-terminus: Large ribosomal subunit protein uL11 (145 aa).

The protein belongs to the universal ribosomal protein uL11 family. In terms of assembly, part of the ribosomal stalk of the 50S ribosomal subunit. Interacts with L10 and the large rRNA to form the base of the stalk. L10 forms an elongated spine to which L12 dimers bind in a sequential fashion forming a multimeric L10(L12)X complex. In terms of processing, one or more lysine residues are methylated.

Its function is as follows. Forms part of the ribosomal stalk which helps the ribosome interact with GTP-bound translation factors. The protein is Large ribosomal subunit protein uL11 of Rickettsia prowazekii (strain Madrid E).